Reading from the N-terminus, the 61-residue chain is Metallothionein-1M (61 aa).

Positions 1-29 (MDPNCSCTTGVSCACTGSCTCKECKCTSC) are beta. Positions 5, 7, 13, 15, 19, 21, 24, 26, 29, 33, 34, 36, 37, 41, 44, 48, 50, 57, 59, and 60 each coordinate a divalent metal cation. Residues 30–61 (KKSCCSCCPVGCAKCAHGCVCKGTLENCSCCA) form an alpha region.

The protein belongs to the metallothionein superfamily. Type 1 family. As to quaternary structure, monomer.

Metallothioneins have a high content of cysteine residues that bind various heavy metals; these proteins are transcriptionally regulated by both heavy metals and glucocorticoids. The sequence is that of Metallothionein-1M (MT1M) from Homo sapiens (Human).